The following is a 451-amino-acid chain: Tubulin alpha chain (451 aa).

Gln-11 contributes to the GTP binding site. An N6-acetyllysine modification is found at Lys-40. Glu-71, Gly-144, Thr-145, Thr-179, Asn-206, and Asn-228 together coordinate GTP. Glu-71 contacts Mg(2+). Glu-254 is an active-site residue.

Belongs to the tubulin family. In terms of assembly, dimer of alpha and beta chains. A typical microtubule is a hollow water-filled tube with an outer diameter of 25 nm and an inner diameter of 15 nM. Alpha-beta heterodimers associate head-to-tail to form protofilaments running lengthwise along the microtubule wall with the beta-tubulin subunit facing the microtubule plus end conferring a structural polarity. Microtubules usually have 13 protofilaments but different protofilament numbers can be found in some organisms and specialized cells. Mg(2+) is required as a cofactor. Post-translationally, undergoes a tyrosination/detyrosination cycle, the cyclic removal and re-addition of a C-terminal tyrosine residue by the enzymes tubulin tyrosine carboxypeptidase (TTCP) and tubulin tyrosine ligase (TTL), respectively. In terms of processing, acetylation of alpha chains at Lys-40 stabilizes microtubules and affects affinity and processivity of microtubule motors. This modification has a role in multiple cellular functions, ranging from cell motility, cell cycle progression or cell differentiation to intracellular trafficking and signaling.

It localises to the cytoplasm. Its subcellular location is the cytoskeleton. It catalyses the reaction GTP + H2O = GDP + phosphate + H(+). Tubulin is the major constituent of microtubules, a cylinder consisting of laterally associated linear protofilaments composed of alpha- and beta-tubulin heterodimers. Microtubules grow by the addition of GTP-tubulin dimers to the microtubule end, where a stabilizing cap forms. Below the cap, tubulin dimers are in GDP-bound state, owing to GTPase activity of alpha-tubulin. This chain is Tubulin alpha chain (TUBA), found in Chlorella vulgaris (Green alga).